Reading from the N-terminus, the 196-residue chain is Pyridoxal 5'-phosphate synthase subunit PdxT (196 aa).

47–49 contributes to the L-glutamine binding site; it reads GES. C79 serves as the catalytic Nucleophile. L-glutamine is bound by residues R106 and 134–135; that span reads IR. Active-site charge relay system residues include H170 and E172.

The protein belongs to the glutaminase PdxT/SNO family. As to quaternary structure, in the presence of PdxS, forms a dodecamer of heterodimers. Only shows activity in the heterodimer.

It catalyses the reaction aldehydo-D-ribose 5-phosphate + D-glyceraldehyde 3-phosphate + L-glutamine = pyridoxal 5'-phosphate + L-glutamate + phosphate + 3 H2O + H(+). The enzyme catalyses L-glutamine + H2O = L-glutamate + NH4(+). It participates in cofactor biosynthesis; pyridoxal 5'-phosphate biosynthesis. Functionally, catalyzes the hydrolysis of glutamine to glutamate and ammonia as part of the biosynthesis of pyridoxal 5'-phosphate. The resulting ammonia molecule is channeled to the active site of PdxS. The chain is Pyridoxal 5'-phosphate synthase subunit PdxT from Bacillus cytotoxicus (strain DSM 22905 / CIP 110041 / 391-98 / NVH 391-98).